Here is a 381-residue protein sequence, read N- to C-terminus: Phosphatidyl-myo-inositol mannosyltransferase (381 aa).

Residues tyrosine 9 and glycine 16 each contribute to the GDP-alpha-D-mannose site. Residues glutamine 18, 69 to 70 (FN), and arginine 75 each bind a 1,2-diacyl-sn-glycero-3-phospho-(1D-myo-inositol). Residues arginine 204, 209 to 210 (RK), 251 to 253 (LDD), arginine 256, 274 to 278 (ESFGI), and glutamate 282 contribute to the GDP-alpha-D-mannose site.

This sequence belongs to the glycosyltransferase group 1 family. Glycosyltransferase 4 subfamily. As to quaternary structure, monomer. Mg(2+) is required as a cofactor.

It is found in the cell membrane. The enzyme catalyses a 1,2-diacyl-sn-glycero-3-phospho-(1D-myo-inositol) + GDP-alpha-D-mannose = a 1,2-diacyl-sn-glycero-3-phospho-[alpha-D-mannopyranosyl-(1&lt;-&gt;6)-D-myo-inositol] + GDP + H(+). Its pathway is phospholipid metabolism; phosphatidylinositol metabolism. Functionally, involved in the biosynthesis of phosphatidyl-myo-inositol mannosides (PIM) which are early precursors in the biosynthesis of lipomannans (LM) and lipoarabinomannans (LAM). Catalyzes the addition of a mannosyl residue from GDP-D-mannose (GDP-Man) to the position 2 of the carrier lipid phosphatidyl-myo-inositol (PI) to generate a phosphatidyl-myo-inositol bearing an alpha-1,2-linked mannose residue (PIM1). In Propionibacterium freudenreichii subsp. shermanii (strain ATCC 9614 / DSM 4902 / CIP 103027 / NCIMB 8099 / CIRM-BIA1), this protein is Phosphatidyl-myo-inositol mannosyltransferase.